Here is a 558-residue protein sequence, read N- to C-terminus: CTP synthase (558 aa).

Residues 1–267 (MAKFVFVTGG…CLEMLDVLNL (267 aa)) are amidoligase domain. Ser-13 serves as a coordination point for CTP. Ser-13 is a UTP binding site. Residues 14 to 19 (SIGKGI) and Asp-71 each bind ATP. Positions 71 and 141 each coordinate Mg(2+). CTP contacts are provided by residues 148–150 (DIE), 188–193 (KTKPTQ), and Lys-224. Residues 188-193 (KTKPTQ) and Lys-224 contribute to the UTP site. The region spanning 292–534 (KVALVGKYVQ…IEAAQLRLPA (243 aa)) is the Glutamine amidotransferase type-1 domain. Residue Gly-354 participates in L-glutamine binding. Cys-381 (nucleophile; for glutamine hydrolysis) is an active-site residue. L-glutamine-binding positions include 382 to 385 (LGMQ), Glu-405, and Arg-462. Residues His-507 and Glu-509 contribute to the active site. A disordered region spans residues 536–558 (PDEALRRQSQTNISAQEQPSRIG). Residues 542–558 (RQSQTNISAQEQPSRIG) show a composition bias toward polar residues.

Belongs to the CTP synthase family. As to quaternary structure, homotetramer.

The enzyme catalyses UTP + L-glutamine + ATP + H2O = CTP + L-glutamate + ADP + phosphate + 2 H(+). The catalysed reaction is L-glutamine + H2O = L-glutamate + NH4(+). It carries out the reaction UTP + NH4(+) + ATP = CTP + ADP + phosphate + 2 H(+). Its pathway is pyrimidine metabolism; CTP biosynthesis via de novo pathway; CTP from UDP: step 2/2. With respect to regulation, allosterically activated by GTP, when glutamine is the substrate; GTP has no effect on the reaction when ammonia is the substrate. The allosteric effector GTP functions by stabilizing the protein conformation that binds the tetrahedral intermediate(s) formed during glutamine hydrolysis. Inhibited by the product CTP, via allosteric rather than competitive inhibition. Catalyzes the ATP-dependent amination of UTP to CTP with either L-glutamine or ammonia as the source of nitrogen. Regulates intracellular CTP levels through interactions with the four ribonucleotide triphosphates. This is CTP synthase from Prochlorococcus marinus (strain MIT 9313).